A 308-amino-acid polypeptide reads, in one-letter code: Homoserine O-acetyltransferase (308 aa).

C142 acts as the Acyl-thioester intermediate in catalysis. K163 and S192 together coordinate substrate. The Proton acceptor role is filled by H235. E237 is an active-site residue. R249 is a binding site for substrate.

This sequence belongs to the MetA family.

The protein localises to the cytoplasm. It carries out the reaction L-homoserine + acetyl-CoA = O-acetyl-L-homoserine + CoA. It participates in amino-acid biosynthesis; L-methionine biosynthesis via de novo pathway; O-acetyl-L-homoserine from L-homoserine: step 1/1. In terms of biological role, transfers an acetyl group from acetyl-CoA to L-homoserine, forming acetyl-L-homoserine. This Rhizobium rhizogenes (strain K84 / ATCC BAA-868) (Agrobacterium radiobacter) protein is Homoserine O-acetyltransferase.